The following is a 664-amino-acid chain: Delta-like protein C (664 aa).

The signal sequence occupies residues 1–20 (MARVLLTCFFILISSHLGKS). At 21–511 (SGVFELKVLS…VNSPALPAAL (491 aa)) the chain is on the extracellular side. One can recognise a DSL domain in the interval 154–198 (VVCDEFYHGEECSDFCRPRNDTFGHFNCDAAGNRICLPGWKGDYC). 27 disulfides stabilise this stretch: Cys-156–Cys-165, Cys-169–Cys-181, Cys-189–Cys-198, Cys-203–Cys-214, Cys-207–Cys-220, Cys-222–Cys-231, Cys-234–Cys-245, Cys-240–Cys-251, Cys-253–Cys-262, Cys-269–Cys-281, Cys-275–Cys-291, Cys-293–Cys-302, Cys-309–Cys-320, Cys-314–Cys-329, Cys-331–Cys-340, Cys-347–Cys-358, Cys-352–Cys-368, Cys-370–Cys-379, Cys-386–Cys-397, Cys-391–Cys-406, Cys-408–Cys-417, Cys-424–Cys-435, Cys-429–Cys-444, Cys-446–Cys-455, Cys-462–Cys-473, Cys-467–Cys-482, and Cys-484–Cys-493. Asn-173 is a glycosylation site (N-linked (GlcNAc...) asparagine). 3 consecutive EGF-like domains span residues 199 to 232 (TEPI…PLCD), 233 to 263 (ECTR…LFCN), and 265 to 303 (DLNF…KNCE). An EGF-like 4; calcium-binding domain is found at 305–341 (ETNECDSNPCKNGGSCNDQENDYTCTCPQGFYGKNCE). 2 consecutive EGF-like domains span residues 343–380 (SAMT…SNCE) and 382–418 (KIDR…SRCE). The EGF-like 7; calcium-binding domain maps to 420–456 (NIDDCSSNPCQNAGTCVDGINGYTCTCTLGFSGKDCR). Positions 458–494 (RSDACSFMPCQNGGTCYTHFSGPVCQCPAGFMGTQCE) constitute an EGF-like 8 domain. The chain crosses the membrane as a helical span at residues 512-532 (IVSFTLGLITLTLVICAAIVV). Topologically, residues 533–664 (LRQMRQNHKA…IEQRVFATEV (132 aa)) are cytoplasmic.

Ubiquitinated by mib, leading to its endocytosis and subsequent degradation. As to expression, strongly expressed in the early retina, where it precedes other delta proteins. Also expressed in cranial ganglia, in sensory epithelia including ear and lateral line and in scattered epidermal cells. In the mesoderm, expression is visible by 50% epiboly; it is expressed subsequently in the tail bud, in stripes in the presomitic mesoderm and in the posterior half of each somite. Also expressed in notochord, blood vessels and pronephros. In contrast to other delta proteins, it is not expressed in the majority of nascent primary neurons. In somites, it marks the posterior part of each formed somite, while deltaD (dld) marks the anterior part.

It is found in the membrane. Functionally, acts as a ligand for Notch receptors and is involved in somitogenesis. Can activate Notch receptors. Required in somite segmentation to keep the oscillations of neighboring presomitic mesoderm cells synchronized. The polypeptide is Delta-like protein C (dlc) (Danio rerio (Zebrafish)).